Reading from the N-terminus, the 377-residue chain is Phosphatidylglycerol--prolipoprotein diacylglyceryl transferase (377 aa).

Transmembrane regions (helical) follow at residues 18–38, 48–68, 93–113, and 119–139; these read PVPLRAYALMIIIGIVVAVVV, MDPALAGEIAYWAVPFGIVGA, IWNGGLGIWGAIAGGALGAWL, and GISLALFADAAAPGIILAQAI. A 1,2-diacyl-sn-glycero-3-phospho-(1'-sn-glycerol) is bound at residue R141. A run of 3 helical transmembrane segments spans residues 177-197, 208-228, and 238-258; these read QPTFLYEFLWNLVVAAILLLV, LFALYVALYTFGRLWIEMLRI, and RVNIWTSAIVCVGAVVALLVV. The interval 265 to 377 is disordered; sequence DVSPQEQRAL…RTRVERPPAT (113 aa). Low complexity-rich tracts occupy residues 288–297 and 308–344; these read AAGETAGETR and GVDVNGADVDGADPSNVNGANVNGADPVNVNVNDADG.

It belongs to the Lgt family.

It localises to the cell membrane. It catalyses the reaction L-cysteinyl-[prolipoprotein] + a 1,2-diacyl-sn-glycero-3-phospho-(1'-sn-glycerol) = an S-1,2-diacyl-sn-glyceryl-L-cysteinyl-[prolipoprotein] + sn-glycerol 1-phosphate + H(+). The protein operates within protein modification; lipoprotein biosynthesis (diacylglyceryl transfer). Its function is as follows. Catalyzes the transfer of the diacylglyceryl group from phosphatidylglycerol to the sulfhydryl group of the N-terminal cysteine of a prolipoprotein, the first step in the formation of mature lipoproteins. This Frankia alni (strain DSM 45986 / CECT 9034 / ACN14a) protein is Phosphatidylglycerol--prolipoprotein diacylglyceryl transferase.